The primary structure comprises 185 residues: Protein GrpE (185 aa).

The interval 1-37 is disordered; it reads MEEQEEKQYNQNIQDNEEGTQMREELQESTSAQQTLQ. The segment covering 28–37 has biased composition (polar residues); the sequence is ESTSAQQTLQ.

This sequence belongs to the GrpE family. In terms of assembly, homodimer.

It localises to the cytoplasm. Functionally, participates actively in the response to hyperosmotic and heat shock by preventing the aggregation of stress-denatured proteins, in association with DnaK and GrpE. It is the nucleotide exchange factor for DnaK and may function as a thermosensor. Unfolded proteins bind initially to DnaJ; upon interaction with the DnaJ-bound protein, DnaK hydrolyzes its bound ATP, resulting in the formation of a stable complex. GrpE releases ADP from DnaK; ATP binding to DnaK triggers the release of the substrate protein, thus completing the reaction cycle. Several rounds of ATP-dependent interactions between DnaJ, DnaK and GrpE are required for fully efficient folding. The protein is Protein GrpE of Helicobacter hepaticus (strain ATCC 51449 / 3B1).